The chain runs to 353 residues: UPF0283 membrane protein YcjF (353 aa).

Over residues 1–19 (MSEPLKPRIDFAEPLKEES) the composition is skewed to basic and acidic residues. The disordered stretch occupies residues 1–29 (MSEPLKPRIDFAEPLKEESTSTFKAQQTF). Residues 20-29 (TSTFKAQQTF) show a composition bias toward polar residues. 3 consecutive transmembrane segments (helical) span residues 70–90 (MVLG…IQWT), 100–120 (AALG…GSVI), and 213–233 (ESTL…FIAW).

Belongs to the UPF0283 family.

The protein resides in the cell inner membrane. In Salmonella arizonae (strain ATCC BAA-731 / CDC346-86 / RSK2980), this protein is UPF0283 membrane protein YcjF.